Here is a 472-residue protein sequence, read N- to C-terminus: MSNMEQDRWSRVKGRLRSSVGEDVYSSWFARMDLESVHDESVHLSVPTRFLKSWIQTHYSDKVLSCWQAELPEVNRVDLTVRSPVRCAAPAKEAPAPVESRRDEQRPSAERSNGATPVSANHDALGGSPLDPRLTFASFVVGRSNTLAHAAAKQVAEGRRGDPVMFNPLYIHSGVGLGKTHLLQAVTWAGNAGTERKVLYLTAEKFMYGFVAALKTQTSLAFKEALRGIDVLVIDDLQFLQGKTTQAEFCHTLNALIDAGRQVVVAADRPPADLESLDERVRSRLAGGLVVEMAPLGEDLRLGILRSRVVAARTHHASFDVPQPVLEYLARTITHNGRDLEGAINRLLAHSKLNNQPVTLEMAEHEVRDLIRPSEPKRIKIEDIQRIVARQYNVSRSDLLSSRRTANVVRPRQVAMYLAKTLTLRSLPEIGRRFGGRDHTTVLHAVRKIEGLVSKDTTLSDEVESLKRQLQE.

The tract at residues 1-73 (MSNMEQDRWS…LSCWQAELPE (73 aa)) is domain I, interacts with DnaA modulators. The interval 73-128 (EVNRVDLTVRSPVRCAAPAKEAPAPVESRRDEQRPSAERSNGATPVSANHDALGGS) is domain II. Residues 89-124 (APAKEAPAPVESRRDEQRPSAERSNGATPVSANHDA) form a disordered region. Residues 99–109 (ESRRDEQRPSA) are compositionally biased toward basic and acidic residues. Residues 110–119 (ERSNGATPVS) are compositionally biased toward polar residues. Positions 129 to 351 (PLDPRLTFAS…GAINRLLAHS (223 aa)) are domain III, AAA+ region. ATP is bound by residues Gly176, Gly178, Lys179, and Thr180. The domain IV, binds dsDNA stretch occupies residues 352–472 (KLNNQPVTLE…VESLKRQLQE (121 aa)).

It belongs to the DnaA family. As to quaternary structure, oligomerizes as a right-handed, spiral filament on DNA at oriC.

Its subcellular location is the cytoplasm. Its function is as follows. Plays an essential role in the initiation and regulation of chromosomal replication. ATP-DnaA binds to the origin of replication (oriC) to initiate formation of the DNA replication initiation complex once per cell cycle. Binds the DnaA box (a 9 base pair repeat at the origin) and separates the double-stranded (ds)DNA. Forms a right-handed helical filament on oriC DNA; dsDNA binds to the exterior of the filament while single-stranded (ss)DNA is stabiized in the filament's interior. The ATP-DnaA-oriC complex binds and stabilizes one strand of the AT-rich DNA unwinding element (DUE), permitting loading of DNA polymerase. After initiation quickly degrades to an ADP-DnaA complex that is not apt for DNA replication. Binds acidic phospholipids. The polypeptide is Chromosomal replication initiator protein DnaA (Rhodopseudomonas palustris (strain TIE-1)).